Consider the following 72-residue polypeptide: Kappa-conotoxin PVIIA (72 aa).

Positions 1–22 are cleaved as a signal peptide; the sequence is MKLTCVVIVVVLFLTACQLITA. A propeptide spanning residues 23-45 is cleaved from the precursor; the sequence is DDSRRTQKHRALRSTTKLSLSTR. Cystine bridges form between cysteine 46-cysteine 61, cysteine 53-cysteine 65, and cysteine 60-cysteine 71. 4-hydroxyproline is present on proline 49.

Belongs to the conotoxin O1 superfamily. Post-translationally, this toxin is not amidated at the C-terminal Val residue. Expressed by the venom duct.

It is found in the secreted. Functionally, kappa-conotoxins bind and inhibit voltage-gated potassium channels (Kv). This toxin inhibits the drosophila Shaker channel (IC(50)=57-80 nM). In vivo, when tested in fish, this toxin induces hyperactivity, followed by continuous contraction and extension of major fins, without immobilization or death. Injection of this peptide together with the delta-conotoxin PVIA causes the sudden tetanus of prey (STOP) syndrome, which is a single, lethal 'fin-pop' in envenomed fish. When tested in mice, induces hyperactivity. This is Kappa-conotoxin PVIIA from Conus purpurascens (Purple cone).